A 252-amino-acid polypeptide reads, in one-letter code: 14-3-3 protein 7 (252 aa).

Belongs to the 14-3-3 family. In terms of assembly, homodimer.

The protein is 14-3-3 protein 7 (TFT7) of Solanum lycopersicum (Tomato).